A 629-amino-acid polypeptide reads, in one-letter code: Natural resistance-associated macrophage protein 2 homolog (629 aa).

At 1 to 151 (MNNNNNNKKL…KSKFSIKKLK (151 aa)) the chain is on the cytoplasmic side. The segment at 50–119 (NVVNGSIEDS…SDIDSSGDSI (70 aa)) is disordered. Residues 62–85 (QQQQQQQQQQQQQQQQQQQQQQQQ) show a composition bias toward low complexity. A compositionally biased stretch (basic and acidic residues) spans 96–105 (DKPFQDRDSN). Over residues 106–118 (IGDGSDIDSSGDS) the composition is skewed to low complexity. A helical transmembrane segment spans residues 152–172 (SFLGPALFISVGYMDPGNWAT). The Extracellular segment spans residues 173–182 (DLEGGSRFGY). Residues 183–203 (QLMWVLLFSNIMALFLQTLVI) form a helical membrane-spanning segment. The Cytoplasmic segment spans residues 204 to 224 (KLALVTKNDLAQQCRKEYSKT). The helical transmembrane segment at 225 to 245 (VNIFLWLILELAIISTDLAEV) threads the bilayer. Residues 246–253 (IGTAIGLN) lie on the Extracellular side of the membrane. A helical membrane pass occupies residues 254-274 (ILFGLPLIAGVAITSLDTLLF). Residues 275–286 (LAIQRWGIRKLE) lie on the Cytoplasmic side of the membrane. The chain crosses the membrane as a helical span at residues 287 to 307 (LLILLLLSMITMCFVIELFLS). At 308–326 (KPIASEVFSGFVPRLNSDS) the chain is on the extracellular side. A helical membrane pass occupies residues 327–347 (VMVATGIVGATTMPHNLFLHG). The Cytoplasmic segment spans residues 348–376 (SVVKSRKIPNDRRKSVIKQAYRYNVIDTV). A helical transmembrane segment spans residues 377–397 (LALNCAFFVNIAILMLAASVF). The Extracellular portion of the chain corresponds to 398–421 (WKSNIQVTELSEAYRLLTKLMDGK). Residues 422–442 (LAAVLFGLGLFLAGQSSTITG) form a helical membrane-spanning segment. The Cytoplasmic segment spans residues 443–468 (TMAGQIVMEGFIKLRIKPWLRRFITR). The helical transmembrane segment at 469–489 (LLAIIPAAIVIIVLGDKGTYT) threads the bilayer. At 490–491 (LL) the chain is on the extracellular side. A helical membrane pass occupies residues 492-512 (IISQVLLSIGLPFAVVPLIIF). At 513–527 (TSSYEIMGEFKNRLS) the chain is on the cytoplasmic side. Residues 528–548 (IIIINSIIALFIIGLNLATIF) traverse the membrane as a helical segment. At 549-565 (QLINDFLHNDSIISKCL) the chain is on the extracellular side. The N-linked (GlcNAc...) asparagine glycan is linked to Asn557. Residues 566–586 (TIIFLIPLSIALCCLLLWLII) traverse the membrane as a helical segment. The Cytoplasmic portion of the chain corresponds to 587–629 (SKINFFTNLLSKIFNNNNNNNNKNIINNNNNYSGNTINNQTIQ).

It belongs to the NRAMP family.

It is found in the cell membrane. In terms of biological role, divalent transition metal (iron and manganese) transporter. The sequence is that of Natural resistance-associated macrophage protein 2 homolog (nramp2) from Dictyostelium discoideum (Social amoeba).